The chain runs to 392 residues: G2/mitotic-specific cyclin-B (392 aa).

Belongs to the cyclin family. Cyclin AB subfamily.

In terms of biological role, essential for the control of the cell cycle at the G2/M (mitosis) transition. Interacts with the CDC2 protein kinase to form MPF. G2/M cyclins accumulate steadily during G2 and are abruptly destroyed at mitosis. This Hydra viridissima (Green hydra) protein is G2/mitotic-specific cyclin-B.